We begin with the raw amino-acid sequence, 299 residues long: ATP phosphoribosyltransferase (299 aa).

This sequence belongs to the ATP phosphoribosyltransferase family. Long subfamily. Equilibrium between an active dimeric form, an inactive hexameric form and higher aggregates. Interconversion between the various forms is largely reversible and is influenced by the natural substrates and inhibitors of the enzyme. The cofactor is Mg(2+).

The protein localises to the cytoplasm. It carries out the reaction 1-(5-phospho-beta-D-ribosyl)-ATP + diphosphate = 5-phospho-alpha-D-ribose 1-diphosphate + ATP. It participates in amino-acid biosynthesis; L-histidine biosynthesis; L-histidine from 5-phospho-alpha-D-ribose 1-diphosphate: step 1/9. Its activity is regulated as follows. Feedback inhibited by histidine. In terms of biological role, catalyzes the condensation of ATP and 5-phosphoribose 1-diphosphate to form N'-(5'-phosphoribosyl)-ATP (PR-ATP). Has a crucial role in the pathway because the rate of histidine biosynthesis seems to be controlled primarily by regulation of HisG enzymatic activity. This chain is ATP phosphoribosyltransferase, found in Klebsiella pneumoniae (strain 342).